The chain runs to 247 residues: 23S rRNA (guanosine-2'-O-)-methyltransferase RlmB (247 aa).

G197, I217, and L226 together coordinate S-adenosyl-L-methionine.

It belongs to the class IV-like SAM-binding methyltransferase superfamily. RNA methyltransferase TrmH family. RlmB subfamily.

Its subcellular location is the cytoplasm. The enzyme catalyses guanosine(2251) in 23S rRNA + S-adenosyl-L-methionine = 2'-O-methylguanosine(2251) in 23S rRNA + S-adenosyl-L-homocysteine + H(+). Functionally, specifically methylates the ribose of guanosine 2251 in 23S rRNA. The protein is 23S rRNA (guanosine-2'-O-)-methyltransferase RlmB of Vibrio vulnificus (strain CMCP6).